The chain runs to 300 residues: Phosphoribosylaminoimidazole-succinocarboxamide synthase (300 aa).

It belongs to the SAICAR synthetase family.

The catalysed reaction is 5-amino-1-(5-phospho-D-ribosyl)imidazole-4-carboxylate + L-aspartate + ATP = (2S)-2-[5-amino-1-(5-phospho-beta-D-ribosyl)imidazole-4-carboxamido]succinate + ADP + phosphate + 2 H(+). The protein operates within purine metabolism; IMP biosynthesis via de novo pathway; 5-amino-1-(5-phospho-D-ribosyl)imidazole-4-carboxamide from 5-amino-1-(5-phospho-D-ribosyl)imidazole-4-carboxylate: step 1/2. The polypeptide is Phosphoribosylaminoimidazole-succinocarboxamide synthase (Methylibium petroleiphilum (strain ATCC BAA-1232 / LMG 22953 / PM1)).